The sequence spans 256 residues: GTP cyclohydrolase FolE2 (256 aa).

It belongs to the GTP cyclohydrolase IV family.

It catalyses the reaction GTP + H2O = 7,8-dihydroneopterin 3'-triphosphate + formate + H(+). The protein operates within cofactor biosynthesis; 7,8-dihydroneopterin triphosphate biosynthesis; 7,8-dihydroneopterin triphosphate from GTP: step 1/1. Converts GTP to 7,8-dihydroneopterin triphosphate. This chain is GTP cyclohydrolase FolE2, found in Maridesulfovibrio salexigens (strain ATCC 14822 / DSM 2638 / NCIMB 8403 / VKM B-1763) (Desulfovibrio salexigens).